The following is a 288-amino-acid chain: NGG1-interacting factor 3 (288 aa).

Belongs to the GTP cyclohydrolase I type 2/NIF3 family. In terms of assembly, may interact with NGG1.

Its subcellular location is the mitochondrion. The sequence is that of NGG1-interacting factor 3 from Saccharomyces cerevisiae (strain ATCC 204508 / S288c) (Baker's yeast).